The following is a 232-amino-acid chain: Homeobox protein SAX-1 (232 aa).

Disordered regions lie at residues 1 to 64, 122 to 150, and 185 to 208; these read CLPD…SCAK, KQHP…RPAA, and LLGA…LCPS. Residues 65–124 constitute a DNA-binding region (homeobox); that stretch reads PRRARTAFTYEQLVALENKFRATRYLSVCERLNLALSLSLTETQVKIWFQNRRTKWKKQH. Low complexity predominate over residues 126–142; it reads GADGAAAPAPPAAARCS.

This sequence belongs to the NK-1 homeobox family. In terms of tissue distribution, transiently expressed in the birth zone of the whole spinal cord regardless of the axial level.

The protein resides in the nucleus. The sequence is that of Homeobox protein SAX-1 (SAX1) from Gallus gallus (Chicken).